Here is a 945-residue protein sequence, read N- to C-terminus: Splicing factor, suppressor of white-apricot homolog (945 aa).

2 disordered regions span residues Met1–Thr28 and Asp156–Glu185. Composition is skewed to basic and acidic residues over residues Ala9–Ala21 and Pro169–Ala178. Residues Ile211 to Tyr253 form an SURP motif 1 repeat. Positions Ser271–Leu301 are disordered. Ser283 carries the post-translational modification Phosphoserine. Positions Asp284–Gly294 are enriched in acidic residues. Position 315 is an N6-acetyllysine (Lys315). Disordered regions lie at residues Lys332–Val355 and Ser403–Ile448. Low complexity predominate over residues Ala335–Pro352. Positions Val412–Thr426 are enriched in pro residues. Over residues Ala427–Ala447 the composition is skewed to low complexity. Residues Val458–Tyr498 form an SURP motif 2 repeat. Disordered regions lie at residues Gly512–Val564, Pro589–Arg680, and Asp712–Lys921. A compositionally biased stretch (low complexity) spans Thr514–Thr527. The span at Ala528–Ala540 shows a compositional bias: acidic residues. A compositionally biased stretch (basic and acidic residues) spans Pro589–Asp598. A phosphoserine mark is found at Ser601 and Ser621. Positions Ser615–Ala630 are enriched in low complexity. The stretch at Glu632–Leu686 forms a coiled coil. Residue Thr639 is modified to Phosphothreonine. Basic and acidic residues-rich tracts occupy residues Leu643–Glu679 and Lys733–Glu752. 2 stretches are compositionally biased toward basic residues: residues Lys753–His787 and Thr795–Ala810. Over residues His811–Ser821 the composition is skewed to basic and acidic residues. Phosphoserine occurs at positions 829 and 831. Over residues Ser835–Ala861 the composition is skewed to basic residues. Low complexity predominate over residues Gln871–Ser894. The segment covering Ser895–Gly908 has biased composition (basic and acidic residues). A phosphoserine mark is found at Ser899 and Ser903. The span at Gln909–Ser920 shows a compositional bias: low complexity.

It localises to the nucleus. Functionally, plays a role as an alternative splicing regulator. Regulates its own expression at the level of RNA processing. Also regulates the splicing of fibronectin and CD45 genes. May act, at least in part, by interaction with other R/S-containing splicing factors. Represses the splicing of MAPT/Tau exon 10. This chain is Splicing factor, suppressor of white-apricot homolog (Sfswap), found in Mus musculus (Mouse).